Here is a 150-residue protein sequence, read N- to C-terminus: Troponin C, isoform 2B (150 aa).

Methionine 1 carries the N-acetylmethionine modification. 4 consecutive EF-hand domains span residues 7-42 (EQLS…MGVK), 43-78 (ISEK…FLIE), 83-118 (ALKA…LDNR), and 119-150 (LTEE…MMNG). Ca(2+) contacts are provided by aspartate 56, aspartate 58, serine 60, glutamate 62, and glutamate 67. Ca(2+) contacts are provided by aspartate 132, aspartate 134, serine 136, threonine 138, and glutamate 143.

This sequence belongs to the troponin C family.

In terms of biological role, troponin is the central regulatory protein of striated muscle contraction. Tn consists of three components: Tn-I which is the inhibitor of actomyosin ATPase, Tn-T which contains the binding site for tropomyosin and Tn-C. The binding of calcium to Tn-C abolishes the inhibitory action of Tn on actin filaments. In Homarus americanus (American lobster), this protein is Troponin C, isoform 2B.